A 187-amino-acid chain; its full sequence is Segregation and condensation protein B (187 aa).

It belongs to the ScpB family. In terms of assembly, homodimer. Homodimerization may be required to stabilize the binding of ScpA to the Smc head domains. Component of a cohesin-like complex composed of ScpA, ScpB and the Smc homodimer, in which ScpA and ScpB bind to the head domain of Smc. The presence of the three proteins is required for the association of the complex with DNA.

The protein resides in the cytoplasm. Functionally, participates in chromosomal partition during cell division. May act via the formation of a condensin-like complex containing Smc and ScpA that pull DNA away from mid-cell into both cell halves. This chain is Segregation and condensation protein B, found in Agathobacter rectalis (strain ATCC 33656 / DSM 3377 / JCM 17463 / KCTC 5835 / VPI 0990) (Eubacterium rectale).